Here is a 208-residue protein sequence, read N- to C-terminus: Protein-L-isoaspartate O-methyltransferase (208 aa).

Serine 59 is a catalytic residue.

This sequence belongs to the methyltransferase superfamily. L-isoaspartyl/D-aspartyl protein methyltransferase family.

Its subcellular location is the cytoplasm. The enzyme catalyses [protein]-L-isoaspartate + S-adenosyl-L-methionine = [protein]-L-isoaspartate alpha-methyl ester + S-adenosyl-L-homocysteine. Functionally, catalyzes the methyl esterification of L-isoaspartyl residues in peptides and proteins that result from spontaneous decomposition of normal L-aspartyl and L-asparaginyl residues. It plays a role in the repair and/or degradation of damaged proteins. This Aliivibrio fischeri (strain ATCC 700601 / ES114) (Vibrio fischeri) protein is Protein-L-isoaspartate O-methyltransferase.